We begin with the raw amino-acid sequence, 501 residues long: Probable cytosol aminopeptidase (501 aa).

Mn(2+)-binding residues include K267 and D272. K279 is a catalytic residue. D290, D349, and E351 together coordinate Mn(2+). Residue R353 is part of the active site.

It belongs to the peptidase M17 family. Requires Mn(2+) as cofactor.

The protein localises to the cytoplasm. The catalysed reaction is Release of an N-terminal amino acid, Xaa-|-Yaa-, in which Xaa is preferably Leu, but may be other amino acids including Pro although not Arg or Lys, and Yaa may be Pro. Amino acid amides and methyl esters are also readily hydrolyzed, but rates on arylamides are exceedingly low.. It catalyses the reaction Release of an N-terminal amino acid, preferentially leucine, but not glutamic or aspartic acids.. In terms of biological role, presumably involved in the processing and regular turnover of intracellular proteins. Catalyzes the removal of unsubstituted N-terminal amino acids from various peptides. In Desulfovibrio desulfuricans (strain ATCC 27774 / DSM 6949 / MB), this protein is Probable cytosol aminopeptidase.